The chain runs to 204 residues: Recombination protein RecR (204 aa).

A C4-type zinc finger spans residues 58 to 75 (CSVCQNITDLGVDPCHIC). Positions 83 to 181 (SVICVVESPT…NVTRIARGIP (99 aa)) constitute a Toprim domain.

This sequence belongs to the RecR family.

Functionally, may play a role in DNA repair. It seems to be involved in an RecBC-independent recombinational process of DNA repair. It may act with RecF and RecO. In Chlorobaculum tepidum (strain ATCC 49652 / DSM 12025 / NBRC 103806 / TLS) (Chlorobium tepidum), this protein is Recombination protein RecR.